A 593-amino-acid chain; its full sequence is NADH-quinone oxidoreductase subunit C/D (593 aa).

The NADH dehydrogenase I subunit C stretch occupies residues 1 to 184 (MTADSALYIP…DPYSLSAAKQ (184 aa)). The NADH dehydrogenase I subunit D stretch occupies residues 208 to 593 (DYMFLNLGPN…IDFVMADVDR (386 aa)).

The protein in the N-terminal section; belongs to the complex I 30 kDa subunit family. This sequence in the C-terminal section; belongs to the complex I 49 kDa subunit family. NDH-1 is composed of 13 different subunits. Subunits NuoB, CD, E, F, and G constitute the peripheral sector of the complex.

Its subcellular location is the cell inner membrane. The catalysed reaction is a quinone + NADH + 5 H(+)(in) = a quinol + NAD(+) + 4 H(+)(out). Functionally, NDH-1 shuttles electrons from NADH, via FMN and iron-sulfur (Fe-S) centers, to quinones in the respiratory chain. The immediate electron acceptor for the enzyme in this species is believed to be ubiquinone. Couples the redox reaction to proton translocation (for every two electrons transferred, four hydrogen ions are translocated across the cytoplasmic membrane), and thus conserves the redox energy in a proton gradient. In Pseudomonas paraeruginosa (strain DSM 24068 / PA7) (Pseudomonas aeruginosa (strain PA7)), this protein is NADH-quinone oxidoreductase subunit C/D.